A 24-amino-acid polypeptide reads, in one-letter code: Metallothionein (24 aa).

Residues C3, C5, C8, C10, C17, C19, and C22 each coordinate Cd(2+).

It belongs to the metallothionein superfamily. Type 8 family. In terms of processing, contains 4 disulfide bonds.

Metallothioneins have a high content of cysteine residues that bind various heavy metals. The polypeptide is Metallothionein (Neonectria lugdunensis (Aquatic fungus)).